Consider the following 742-residue polypeptide: Kanadaptin (742 aa).

Over residues 1–16 the composition is skewed to polar residues; that stretch reads MADILSQSETLASQDL. Residues 1–112 form a disordered region; sequence MADILSQSET…PPWGGPATAP (112 aa). The segment covering 27–43 has biased composition (low complexity); the sequence is VSPAARSKAPASSSSNP. The residue at position 28 (Ser-28) is a Phosphoserine. A compositionally biased stretch (basic and acidic residues) spans 72 to 82; sequence GDFRSLQEEQS. Ser-90 carries the phosphoserine modification. The segment covering 96-106 has biased composition (pro residues); that stretch reads RAPPYQEPPWG. The FHA domain occupies 135–195; the sequence is CLFGRLSGCD…HGTFLNKTRI (61 aa). The segment at 254–282 is disordered; sequence LGEDSDEEEEMDTSERKINAGSQDDEMGC. Acidic residues predominate over residues 256-265; it reads EDSDEEEEMD. Residues Ser-258 and Ser-412 each carry the phosphoserine modification. Residue Lys-441 forms a Glycyl lysine isopeptide (Lys-Gly) (interchain with G-Cter in SUMO2) linkage. Positions 443-476 form a coiled coil; the sequence is ETFESLVAKLNDAERELSEISERLKASSQVLSES. Ser-476 bears the Phosphoserine mark. The interval 565–742 is disordered; the sequence is LKTGTVGKLP…RTHLNDKYGY (178 aa). Positions 591 to 606 are enriched in acidic residues; sequence PEVEEEEEEEEEEEKE. Residues 607 to 619 are compositionally biased toward basic and acidic residues; the sequence is KEEHEKKKLEDGS. A phosphoserine mark is found at Ser-655 and Ser-658. Low complexity predominate over residues 699-708; sequence PGPGKLPPTL. The segment covering 732-742 has biased composition (basic and acidic residues); the sequence is GRTHLNDKYGY.

In terms of tissue distribution, ubiquitously expressed.

It is found in the nucleus. Its subcellular location is the cytoplasm. The chain is Kanadaptin (SLC4A1AP) from Homo sapiens (Human).